The sequence spans 295 residues: 4-diphosphocytidyl-2-C-methyl-D-erythritol kinase (295 aa).

Residue Lys22 is part of the active site. 106-116 (PAGGGFGGGSS) serves as a coordination point for ATP. Asp148 is a catalytic residue.

This sequence belongs to the GHMP kinase family. IspE subfamily.

It carries out the reaction 4-CDP-2-C-methyl-D-erythritol + ATP = 4-CDP-2-C-methyl-D-erythritol 2-phosphate + ADP + H(+). Its pathway is isoprenoid biosynthesis; isopentenyl diphosphate biosynthesis via DXP pathway; isopentenyl diphosphate from 1-deoxy-D-xylulose 5-phosphate: step 3/6. Its function is as follows. Catalyzes the phosphorylation of the position 2 hydroxy group of 4-diphosphocytidyl-2C-methyl-D-erythritol. In Xanthomonas campestris pv. campestris (strain 8004), this protein is 4-diphosphocytidyl-2-C-methyl-D-erythritol kinase.